Here is a 199-residue protein sequence, read N- to C-terminus: Fe/S biogenesis protein NfuA (199 aa).

Cysteine 151 and cysteine 154 together coordinate [4Fe-4S] cluster.

It belongs to the NfuA family. Homodimer. [4Fe-4S] cluster serves as cofactor.

Its function is as follows. Involved in iron-sulfur cluster biogenesis. Binds a 4Fe-4S cluster, can transfer this cluster to apoproteins, and thereby intervenes in the maturation of Fe/S proteins. Could also act as a scaffold/chaperone for damaged Fe/S proteins. This chain is Fe/S biogenesis protein NfuA, found in Xanthomonas oryzae pv. oryzae (strain PXO99A).